Here is a 202-residue protein sequence, read N- to C-terminus: Holliday junction branch migration complex subunit RuvA (202 aa).

Residues 1-64 (MFAYIRGRLE…EDVISLYGFL (64 aa)) form a domain I region. The interval 65-143 (TQEELNVFEL…KEQLTEYAQS (79 aa)) is domain II. Residues 144–152 (EEGGKVLDT) form a flexible linker region. Positions 152-202 (TDSSKMAEAVSALMVLGYSPAEANKAVSAVYREDMDIETIIKNALKGLARP) are domain III.

This sequence belongs to the RuvA family. As to quaternary structure, homotetramer. Forms an RuvA(8)-RuvB(12)-Holliday junction (HJ) complex. HJ DNA is sandwiched between 2 RuvA tetramers; dsDNA enters through RuvA and exits via RuvB. An RuvB hexamer assembles on each DNA strand where it exits the tetramer. Each RuvB hexamer is contacted by two RuvA subunits (via domain III) on 2 adjacent RuvB subunits; this complex drives branch migration. In the full resolvosome a probable DNA-RuvA(4)-RuvB(12)-RuvC(2) complex forms which resolves the HJ.

The protein localises to the cytoplasm. Functionally, the RuvA-RuvB-RuvC complex processes Holliday junction (HJ) DNA during genetic recombination and DNA repair, while the RuvA-RuvB complex plays an important role in the rescue of blocked DNA replication forks via replication fork reversal (RFR). RuvA specifically binds to HJ cruciform DNA, conferring on it an open structure. The RuvB hexamer acts as an ATP-dependent pump, pulling dsDNA into and through the RuvAB complex. HJ branch migration allows RuvC to scan DNA until it finds its consensus sequence, where it cleaves and resolves the cruciform DNA. The protein is Holliday junction branch migration complex subunit RuvA of Acetivibrio thermocellus (strain ATCC 27405 / DSM 1237 / JCM 9322 / NBRC 103400 / NCIMB 10682 / NRRL B-4536 / VPI 7372) (Clostridium thermocellum).